The following is a 468-amino-acid chain: 6-phospho-beta-galactosidase (468 aa).

Residues Gln-19, His-116, Asn-159, Glu-160, and Asn-297 each contribute to the D-galactose 6-phosphate site. Glu-160 serves as the catalytic Proton donor. Glu-375 serves as the catalytic Nucleophile. 4 residues coordinate D-galactose 6-phosphate: Ser-428, Trp-429, Lys-435, and Tyr-437.

It belongs to the glycosyl hydrolase 1 family.

The enzyme catalyses a 6-phospho-beta-D-galactoside + H2O = D-galactose 6-phosphate + an alcohol. The protein operates within carbohydrate metabolism; lactose degradation; D-galactose 6-phosphate and beta-D-glucose from lactose 6-phosphate: step 1/1. The polypeptide is 6-phospho-beta-galactosidase (Lactococcus lactis subsp. lactis (Streptococcus lactis)).